Reading from the N-terminus, the 364-residue chain is Caffeic acid 3-O-methyltransferase 3 (364 aa).

Residue 129–135 (MNQDKVL) participates in substrate binding. A substrate binding region spans residues 161–179 (AFEYHGTDPRFNKVFNKGM). 5 residues coordinate S-adenosyl-L-methionine: glycine 207, aspartate 230, aspartate 250, methionine 251, and lysine 264. Residue histidine 268 is the Proton acceptor of the active site.

Belongs to the class I-like SAM-binding methyltransferase superfamily. Cation-independent O-methyltransferase family. COMT subfamily. In terms of assembly, homodimer.

The enzyme catalyses (E)-caffeate + S-adenosyl-L-methionine = (E)-ferulate + S-adenosyl-L-homocysteine + H(+). Its pathway is aromatic compound metabolism; phenylpropanoid biosynthesis. In terms of biological role, catalyzes the conversion of caffeic acid to ferulic acid and of 5-hydroxyferulic acid to sinapic acid. The resulting products may subsequently be converted to the corresponding alcohols that are incorporated into lignins. The sequence is that of Caffeic acid 3-O-methyltransferase 3 (HOMT3) from Populus kitakamiensis (Aspen).